The primary structure comprises 230 residues: Ribose-5-phosphate isomerase A (230 aa).

Residues 31-34, 88-91, and 101-104 each bind substrate; these read TGST, DGSD, and KGGG. Glu-110 (proton acceptor) is an active-site residue. Lys-128 contributes to the substrate binding site.

This sequence belongs to the ribose 5-phosphate isomerase family. In terms of assembly, homodimer.

The catalysed reaction is aldehydo-D-ribose 5-phosphate = D-ribulose 5-phosphate. It participates in carbohydrate degradation; pentose phosphate pathway; D-ribose 5-phosphate from D-ribulose 5-phosphate (non-oxidative stage): step 1/1. In terms of biological role, catalyzes the reversible conversion of ribose-5-phosphate to ribulose 5-phosphate. This chain is Ribose-5-phosphate isomerase A, found in Lactobacillus helveticus (strain DPC 4571).